Here is a 357-residue protein sequence, read N- to C-terminus: DNA replication and repair protein RecF (357 aa).

30–37 (GANGSGKT) is an ATP binding site.

Belongs to the RecF family.

It localises to the cytoplasm. Its function is as follows. The RecF protein is involved in DNA metabolism; it is required for DNA replication and normal SOS inducibility. RecF binds preferentially to single-stranded, linear DNA. It also seems to bind ATP. This is DNA replication and repair protein RecF from Salmonella schwarzengrund (strain CVM19633).